We begin with the raw amino-acid sequence, 465 residues long: Lactaldehyde dehydrogenase (465 aa).

220-225 (GSVEIG) serves as a coordination point for NAD(+). Active-site residues include E240 and C274.

This sequence belongs to the aldehyde dehydrogenase family. As to quaternary structure, homotetramer.

The catalysed reaction is (S)-lactaldehyde + NAD(+) + H2O = (S)-lactate + NADH + 2 H(+). It participates in cofactor biosynthesis; coenzyme F420 biosynthesis. Functionally, involved in F420 biosynthesis through the oxidation of lactaldehyde to lactate. The sequence is that of Lactaldehyde dehydrogenase from Methanococcus maripaludis (strain C7 / ATCC BAA-1331).